The chain runs to 433 residues: Enolase (433 aa).

Gln-167 contributes to the (2R)-2-phosphoglycerate binding site. Glu-209 acts as the Proton donor in catalysis. Residues Asp-246, Glu-291, and Asp-318 each coordinate Mg(2+). Lys-343, Arg-372, Ser-373, and Lys-394 together coordinate (2R)-2-phosphoglycerate. The active-site Proton acceptor is the Lys-343.

This sequence belongs to the enolase family. As to quaternary structure, component of the RNA degradosome, a multiprotein complex involved in RNA processing and mRNA degradation. Mg(2+) is required as a cofactor.

It is found in the cytoplasm. The protein localises to the secreted. Its subcellular location is the cell surface. The enzyme catalyses (2R)-2-phosphoglycerate = phosphoenolpyruvate + H2O. It participates in carbohydrate degradation; glycolysis; pyruvate from D-glyceraldehyde 3-phosphate: step 4/5. Functionally, catalyzes the reversible conversion of 2-phosphoglycerate (2-PG) into phosphoenolpyruvate (PEP). It is essential for the degradation of carbohydrates via glycolysis. The protein is Enolase of Marinomonas sp. (strain MWYL1).